The following is a 103-amino-acid chain: Large ribosomal subunit protein bL21 (103 aa).

Belongs to the bacterial ribosomal protein bL21 family. In terms of assembly, part of the 50S ribosomal subunit. Contacts protein L20.

In terms of biological role, this protein binds to 23S rRNA in the presence of protein L20. This is Large ribosomal subunit protein bL21 from Acidovorax ebreus (strain TPSY) (Diaphorobacter sp. (strain TPSY)).